The following is a 480-amino-acid chain: Citrate synthase 1, peroxisomal (480 aa).

Active-site residues include H321, H360, and D416.

It belongs to the citrate synthase family. As to expression, expressed only in siliques. Not expressed in flower, stem, cauline leaf, young leaf, mature leaf and senescent leaf.

Its subcellular location is the peroxisome. The enzyme catalyses oxaloacetate + acetyl-CoA + H2O = citrate + CoA + H(+). Its pathway is carbohydrate metabolism; tricarboxylic acid cycle; isocitrate from oxaloacetate: step 1/2. This Arabidopsis thaliana (Mouse-ear cress) protein is Citrate synthase 1, peroxisomal (CSY1).